Here is a 250-residue protein sequence, read N- to C-terminus: Triosephosphate isomerase (250 aa).

A substrate-binding site is contributed by 9–11 (NWK). The active-site Electrophile is His96. Residue Glu166 is the Proton acceptor of the active site. Substrate-binding positions include Gly172, Ser212, and 233–234 (GG).

The protein belongs to the triosephosphate isomerase family. In terms of assembly, homodimer.

It localises to the cytoplasm. The enzyme catalyses D-glyceraldehyde 3-phosphate = dihydroxyacetone phosphate. It functions in the pathway carbohydrate biosynthesis; gluconeogenesis. It participates in carbohydrate degradation; glycolysis; D-glyceraldehyde 3-phosphate from glycerone phosphate: step 1/1. Its function is as follows. Involved in the gluconeogenesis. Catalyzes stereospecifically the conversion of dihydroxyacetone phosphate (DHAP) to D-glyceraldehyde-3-phosphate (G3P). In Chlorobium phaeobacteroides (strain BS1), this protein is Triosephosphate isomerase.